Reading from the N-terminus, the 100-residue chain is Small ribosomal subunit protein uS14c (100 aa).

The protein belongs to the universal ribosomal protein uS14 family. As to quaternary structure, part of the 30S ribosomal subunit.

The protein localises to the plastid. Its subcellular location is the chloroplast. Binds 16S rRNA, required for the assembly of 30S particles. The sequence is that of Small ribosomal subunit protein uS14c from Porphyra purpurea (Red seaweed).